The chain runs to 388 residues: Histone H2A.Y (388 aa).

LRR repeat units follow at residues 54–75, 76–96, and 100–121; these read SLQM…PHVP, SLIR…QYLR, and HLQT…KRLG. An LRRCT domain is found at 134-172; it reads NPVVNTNNYRNLVFNLFPSLVILDTLDKNGIDQEKAALD. The tract at residues 256 to 279 is disordered; the sequence is RKAPASRNGGVPSKAGKGKMNAFS.

This sequence belongs to the histone H2A family. The nucleosome is a histone octamer containing two molecules each of H2A, H2B, H3 and H4 assembled in one H3-H4 heterotetramer and two H2A-H2B heterodimers. The octamer wraps approximately 147 bp of DNA.

The protein resides in the nucleus. It is found in the chromosome. Functionally, variant histone H2A which replaces conventional H2A in a subset of nucleosomes. Nucleosomes wrap and compact DNA into chromatin, limiting DNA accessibility to the cellular machineries which require DNA as a template. Histones thereby play a central role in transcription regulation, DNA repair, DNA replication and chromosomal stability. DNA accessibility is regulated via a complex set of post-translational modifications of histones, also called histone code, and nucleosome remodeling. This chain is Histone H2A.Y (HTAY), found in Tetrahymena thermophila (strain SB210).